The chain runs to 220 residues: MMAYLVFLGPPGAGKGTYAKRLQEITGIPHISTGDIFRDIVKKENDELGKKIKEIMERGELVPDELVNEVVKRRLSEKDCERGFILDGYPRTVAQAEFLDDFLKNQNKELTAAVLFEVPEEVVVQRLTARRICPKCGRIYNLISLPPKEDELCDDCKVKLVQREDDKEETVRHRYKVYLEKTQPVIDYYDKKGILKRVDGTIGIDNVIAEVLKIVGWSDK.

Residue 12 to 17 participates in ATP binding; the sequence is GAGKGT. The segment at 32–62 is NMP; that stretch reads STGDIFRDIVKKENDELGKKIKEIMERGELV. Residues Thr33, Arg38, 60-62, 88-91, and Gln95 each bind AMP; these read ELV and GYPR. Positions 129–166 are LID; the sequence is ARRICPKCGRIYNLISLPPKEDELCDDCKVKLVQREDD. An ATP-binding site is contributed by Arg130. Zn(2+)-binding residues include Cys133 and Cys136. 139–140 is a binding site for ATP; it reads IY. The Zn(2+) site is built by Cys153 and Cys156. The AMP site is built by Arg163 and Arg174. Residue Ile202 coordinates ATP.

It belongs to the adenylate kinase family. In terms of assembly, monomer.

The protein resides in the cytoplasm. It carries out the reaction AMP + ATP = 2 ADP. Its pathway is purine metabolism; AMP biosynthesis via salvage pathway; AMP from ADP: step 1/1. In terms of biological role, catalyzes the reversible transfer of the terminal phosphate group between ATP and AMP. Plays an important role in cellular energy homeostasis and in adenine nucleotide metabolism. This Thermotoga petrophila (strain ATCC BAA-488 / DSM 13995 / JCM 10881 / RKU-1) protein is Adenylate kinase.